A 341-amino-acid polypeptide reads, in one-letter code: MWLNSTSLGACFRPVNITLQERRAIASPWFAASFCALGLGSNLLALSVLAGARPGAGPRSSFLALLCGLVLTDFLGLLVTGAVVASQHAALLDWRATDPGCRLCHFMGAAMVFFGLCPLLLGAAMAAERFVGITRPFSRPAATSRRAWATVGLVWVGAGTLGLLPLLGLGRYSVQYPGSWCFLTLGAERGDVAFGLMFALLGSVSVGLSLLLNTVSVATLCRVYHAREATQRPRDCEVEMMVQLVGIMVVATVCWMPLLVFILQTLLQTLPVMSPSGQLLRTTERQLLIYLRVATWNQILDPWVYILFRRSVLRRLHPRFTSQLQAVSLHSPPTQAMLSGP.

Residues 1–29 lie on the Extracellular side of the membrane; sequence MWLNSTSLGACFRPVNITLQERRAIASPW. 2 N-linked (GlcNAc...) asparagine glycosylation sites follow: Asn-4 and Asn-16. A helical transmembrane segment spans residues 30 to 52; that stretch reads FAASFCALGLGSNLLALSVLAGA. Topologically, residues 53-65 are cytoplasmic; it reads RPGAGPRSSFLAL. Residues 66 to 86 traverse the membrane as a helical segment; the sequence is LCGLVLTDFLGLLVTGAVVAS. Residues 87 to 105 are Extracellular-facing; that stretch reads QHAALLDWRATDPGCRLCH. Residues Cys-104 and Cys-181 are joined by a disulfide bond. The chain crosses the membrane as a helical span at residues 106–127; that stretch reads FMGAAMVFFGLCPLLLGAAMAA. Over 128 to 147 the chain is Cytoplasmic; sequence ERFVGITRPFSRPAATSRRA. Residues 148 to 170 form a helical membrane-spanning segment; sequence WATVGLVWVGAGTLGLLPLLGLG. Residues 171–191 lie on the Extracellular side of the membrane; the sequence is RYSVQYPGSWCFLTLGAERGD. The chain crosses the membrane as a helical span at residues 192-217; sequence VAFGLMFALLGSVSVGLSLLLNTVSV. The Cytoplasmic portion of the chain corresponds to 218-244; that stretch reads ATLCRVYHAREATQRPRDCEVEMMVQL. The chain crosses the membrane as a helical span at residues 245-268; it reads VGIMVVATVCWMPLLVFILQTLLQ. The Extracellular segment spans residues 269–287; it reads TLPVMSPSGQLLRTTERQL. Residues 288 to 309 form a helical membrane-spanning segment; sequence LIYLRVATWNQILDPWVYILFR. Topologically, residues 310–341 are cytoplasmic; that stretch reads RSVLRRLHPRFTSQLQAVSLHSPPTQAMLSGP. Residue Ser-328 is modified to Phosphoserine.

It belongs to the G-protein coupled receptor 1 family. In terms of assembly, interacts with RPGRIP1L. Interacts with RACK1; the interaction regulates TBXA2R cell surface expression. As to expression, in the brain, expressed in all types of glial cells. In the kidney, expressed in the mesangial cells of the glomerulus, smooth muscle cells of the renal arterioles, and in transitional cell epithelium of renal pelvis.

It is found in the cell membrane. In terms of biological role, receptor for thromboxane A2 (TXA2), a potent stimulator of platelet aggregation. The activity of this receptor is mediated by a G-protein that activates a phosphatidylinositol-calcium second messenger system. In the kidney, the binding of TXA2 to glomerular TP receptors causes intense vasoconstriction. Activates phospholipase C and adenylyl cyclase. This is Thromboxane A2 receptor (Tbxa2r) from Rattus norvegicus (Rat).